Consider the following 338-residue polypeptide: Probable tRNA pseudouridine synthase B (338 aa).

The Nucleophile role is filled by aspartate 80. In terms of domain architecture, PUA spans leucine 247–methionine 322.

Belongs to the pseudouridine synthase TruB family. Type 2 subfamily.

The enzyme catalyses uridine(55) in tRNA = pseudouridine(55) in tRNA. Functionally, could be responsible for synthesis of pseudouridine from uracil-55 in the psi GC loop of transfer RNAs. This Methanopyrus kandleri (strain AV19 / DSM 6324 / JCM 9639 / NBRC 100938) protein is Probable tRNA pseudouridine synthase B.